The primary structure comprises 134 residues: UPF0412 protein YaaI (134 aa).

Positions Met-1–Ala-23 are cleaved as a signal peptide.

The protein belongs to the UPF0412 family.

This chain is UPF0412 protein YaaI, found in Salmonella typhimurium (strain LT2 / SGSC1412 / ATCC 700720).